The following is a 671-amino-acid chain: UvrABC system protein B (671 aa).

Residues 25–412 form the Helicase ATP-binding domain; it reads EGIEAGLAHQ…AGRVVEQVVR (388 aa). 38–45 is a binding site for ATP; that stretch reads GVTGSGKT. The Beta-hairpin motif lies at 91-114; the sequence is YYDYYQPEAYVPSSDTFIEKDASI. The Helicase C-terminal domain maps to 429-582; the sequence is QVDDLLSEIT…QIAFNLANGI (154 aa). The interval 601-623 is disordered; sequence PGSRSKKRKGMAKAAEENARYEN. Over residues 614-623 the composition is skewed to basic and acidic residues; the sequence is AAEENARYEN. A UVR domain is found at 632 to 667; it reads TKRIRQLEEKMYQLARDLEFEAAAQMRDEITKLRER.

It belongs to the UvrB family. In terms of assembly, forms a heterotetramer with UvrA during the search for lesions. Interacts with UvrC in an incision complex.

It localises to the cytoplasm. Functionally, the UvrABC repair system catalyzes the recognition and processing of DNA lesions. A damage recognition complex composed of 2 UvrA and 2 UvrB subunits scans DNA for abnormalities. Upon binding of the UvrA(2)B(2) complex to a putative damaged site, the DNA wraps around one UvrB monomer. DNA wrap is dependent on ATP binding by UvrB and probably causes local melting of the DNA helix, facilitating insertion of UvrB beta-hairpin between the DNA strands. Then UvrB probes one DNA strand for the presence of a lesion. If a lesion is found the UvrA subunits dissociate and the UvrB-DNA preincision complex is formed. This complex is subsequently bound by UvrC and the second UvrB is released. If no lesion is found, the DNA wraps around the other UvrB subunit that will check the other stand for damage. In Pseudomonas fluorescens (strain ATCC BAA-477 / NRRL B-23932 / Pf-5), this protein is UvrABC system protein B.